Consider the following 114-residue polypeptide: Ig heavy chain V-A2 region BS-1 (114 aa).

At Gln1 the chain carries Pyrrolidone carboxylic acid. Residues 1-107 (QSVKESEGGL…YLGLMDVWGP (107 aa)) enclose the Ig-like domain.

The sequence is that of Ig heavy chain V-A2 region BS-1 from Oryctolagus cuniculus (Rabbit).